The chain runs to 659 residues: Zinc finger protein 304 (659 aa).

In terms of domain architecture, KRAB spans 14-88; that stretch reads VTFEDVFVYF…TAESGLFQKA (75 aa). 16 consecutive C2H2-type zinc fingers follow at residues 89-111, 115-139, 251-273, 279-301, 307-329, 335-357, 363-385, 391-413, 419-441, 447-469, 475-497, 503-525, 531-553, 559-581, 587-609, and 615-637; these read HPCEMCDPLLKDILHLAEHQGSH, KLCTRGLCRRRFSFSANFYQHQKQH, FRCLPCGNVFKEKSALINHRKIH, HVCKECGKAFIHLHHLKMHQKFH, YTCSECGKAFSRKDTLVQHQRVH, YDCSECGKAYSRSSHLVQHQRIH, YKCNKCGKAFSRKDTLVQHQRFH, YECSECGKFFSQSSHLIEHWRIH, YECIECGKFFSHNSSLIKHRRVH, YVCSKCGKAFGCKDTLVQHQIIH, YECSECGKAFSRKDTLVQHQKIH, YECGECGKFFSHSSNLIVHQRIH, YECNECGKCFSHNSSLILHQRVH, YVCSECGKAYISSSHLVQHKKVH, YECSECGKFFSRNSGLILHQRVH, and YVCSECGKAYSRSSHLVRHQKAH.

This sequence belongs to the krueppel C2H2-type zinc-finger protein family. Probably part of a corepressor complex containing ZNF304, TRIM28, SETDB1 and DNMT1; leading to promoter hypermethylation and transcriptional silencing. Probably associates with Polycomb group (PcG) complexes; leading to trimethylation of 'Lys-27' of histone H3 (H3K27me3). Interacts with USP28. Post-translationally, deubiquitinated by USP28; the deubiquitination leads to the stabilization of ZNF304 from proteolytic degradation. In terms of tissue distribution, expressed in undifferentiated embryonic stem cells (ESCs). Expressed strongly in colorectal cancers cells (CRCs). Expressed strongly in ovarian carcinoma (OC) tumor cell lines compared to non-transformed ovarian epithelial cells (at protein level). Expressed in lymphoid tissues, thyroid, adrenal gland, prostate, pancreas and skeletal muscles.

The protein resides in the nucleus. In terms of biological role, acts as a transcriptional regulator and plays a role in gene silencing. Probably forms a corepressor complex required for activated KRAS-mediated promoter hypermethylation and transcriptional silencing of several tumor suppressor genes (TSGs) or other tumor-related genes in colorectal cancer (CRC) cells. Also required to maintain a transcriptionally repressive state of genes in undifferentiated embryonic stem cells (ESCs) by inducing trimethylation of 'Lys-27' of histone H3 (H3K27me3) in a Polycomb group (PcG) complexes-dependent manner. Associates at promoter regions of TSGs and mediates the recruitment of the corepressor complex containing the scaffolding protein TRIM28, methyltransferase DNMT1 and histone methyltransferase SETDB1 and/or the PcG complexes at those sites. Transcription factor involved in the metastatic cascade process by inducing cell migration and proliferation and gain resistance to anoikis of ovarian carcinoma (OC) cells via integrin-mediated signaling pathways. Associates with the ITGB1 promoter and positively regulates beta-1 integrin transcription expression. Promotes angiogenesis. Promotes tumor growth. This is Zinc finger protein 304 from Homo sapiens (Human).